The primary structure comprises 756 residues: Serine/threonine-protein kinase CBK1 (756 aa).

Disordered regions lie at residues 1–180 (MYNS…SYSS) and 242–261 (QQQQQQQSQSPVQSGFNNGT). Residues 23–34 (QQQDQQHQQQQQ) are compositionally biased toward low complexity. Polar residues predominate over residues 53–77 (FSSNYMKEQGSHQSLQEHLQRETGN). Phosphothreonine is present on threonine 109. Residues 120-180 (HNNNSQSMVQ…TLRSNGSYSS (61 aa)) show a composition bias toward polar residues. Residues 242 to 255 (QQQQQQQSQSPVQS) show a composition bias toward low complexity. The Protein kinase domain maps to 352–672 (FHTVKVIGKG…ADEIKSHPFF (321 aa)). ATP is bound by residues 358-366 (IGKGAFGEV) and lysine 381. Aspartate 475 acts as the Proton acceptor in catalysis. One can recognise an AGC-kinase C-terminal domain in the interval 673–754 (RGVDWNTIRQ…SRFDYLTRKN (82 aa)). Residues 707 to 732 (NVPDSPAMAQAAKQREQMTKQGGSAP) form a disordered region.

It belongs to the protein kinase superfamily. STE Ser/Thr protein kinase family. COT1 subfamily. In terms of assembly, associates with PAG1/TAO3 and interacts with MOB2.

The enzyme catalyses L-seryl-[protein] + ATP = O-phospho-L-seryl-[protein] + ADP + H(+). The catalysed reaction is L-threonyl-[protein] + ATP = O-phospho-L-threonyl-[protein] + ADP + H(+). Its function is as follows. Protein kinase that seems to play a role in the regulation of cell morphogenesis and proliferation. The sequence is that of Serine/threonine-protein kinase CBK1 (CBK1) from Saccharomyces cerevisiae (strain ATCC 204508 / S288c) (Baker's yeast).